The primary structure comprises 84 residues: Small ribosomal subunit protein uS17 (84 aa).

The protein belongs to the universal ribosomal protein uS17 family. In terms of assembly, part of the 30S ribosomal subunit.

Functionally, one of the primary rRNA binding proteins, it binds specifically to the 5'-end of 16S ribosomal RNA. This chain is Small ribosomal subunit protein uS17, found in Hamiltonella defensa subsp. Acyrthosiphon pisum (strain 5AT).